Here is a 407-residue protein sequence, read N- to C-terminus: Peptidase T (407 aa).

Residue His82 coordinates Zn(2+). Asp84 is a catalytic residue. Asp143 is a Zn(2+) binding site. The Proton acceptor role is filled by Glu177. Residues Glu178, Asp200, and His382 each coordinate Zn(2+).

Belongs to the peptidase M20B family. The cofactor is Zn(2+).

Its subcellular location is the cytoplasm. The catalysed reaction is Release of the N-terminal residue from a tripeptide.. In terms of biological role, cleaves the N-terminal amino acid of tripeptides. The sequence is that of Peptidase T from Streptococcus pyogenes serotype M1.